The sequence spans 216 residues: Pyridoxine/pyridoxamine 5'-phosphate oxidase (216 aa).

FMN contacts are provided by residues 65–70 (RMVLLK), 80–81 (YT), R86, K87, and Q109. K70 serves as a coordination point for substrate. The substrate site is built by Y127, R131, and S135. Residues 144-145 (QS) and W189 each bind FMN. 195–197 (RLH) is a binding site for substrate. R199 lines the FMN pocket.

It belongs to the pyridoxamine 5'-phosphate oxidase family. In terms of assembly, homodimer. FMN serves as cofactor.

The catalysed reaction is pyridoxamine 5'-phosphate + O2 + H2O = pyridoxal 5'-phosphate + H2O2 + NH4(+). It catalyses the reaction pyridoxine 5'-phosphate + O2 = pyridoxal 5'-phosphate + H2O2. The protein operates within cofactor metabolism; pyridoxal 5'-phosphate salvage; pyridoxal 5'-phosphate from pyridoxamine 5'-phosphate: step 1/1. Its pathway is cofactor metabolism; pyridoxal 5'-phosphate salvage; pyridoxal 5'-phosphate from pyridoxine 5'-phosphate: step 1/1. Its function is as follows. Catalyzes the oxidation of either pyridoxine 5'-phosphate (PNP) or pyridoxamine 5'-phosphate (PMP) into pyridoxal 5'-phosphate (PLP). This Sphingopyxis alaskensis (strain DSM 13593 / LMG 18877 / RB2256) (Sphingomonas alaskensis) protein is Pyridoxine/pyridoxamine 5'-phosphate oxidase.